A 355-amino-acid polypeptide reads, in one-letter code: Putative beta-lactamase HcpE (355 aa).

The first 22 residues, 1-22 (MNIKILKILVGGLFFLSLNAHL), serve as a signal peptide directing secretion. TPR repeat units follow at residues 27–60 (DNSFLGIGERAYKSGNYSKAASYFKKACNDGVSE), 63–96 (TQLGIIYENGQGTRIDYKKALEYYKTACQADDRE), 98–131 (CFGLGGLYDEGLGTAQNYQEAIDAYAKACVLKHP), 132–166 (ESCYNLGIIYDRKIKGNAAQAVTYYQKSCNFDMAK), 202–240 (GQACRALGSLFENGDAGLDEDFEVAFDYLQKACALNNSG), 245–275 (LGSMYMLGRYVKKDPQKAFNYFKQACDMGSA), 276–311 (VSCSRMGFMYSQGDTVSKDLRKALDNYERGCDMGDE), and 312–344 (VGCFALAGMYYNMKDKENAIMIYDKGCKLGMKQ). Cystine bridges form between Cys54–Cys62, Cys90–Cys98, Cys126–Cys134, Cys160–Cys168, Cys197–Cys205, Cys234–Cys242, Cys270–Cys278, Cys306–Cys314, and Cys338–Cys346.

It belongs to the hcp beta-lactamase family.

It is found in the secreted. It catalyses the reaction a beta-lactam + H2O = a substituted beta-amino acid. May hydrolyze 6-aminopenicillinic acid and 7-aminocephalosporanic acid (ACA) derivatives. This is Putative beta-lactamase HcpE (hcpE) from Helicobacter pylori (strain J99 / ATCC 700824) (Campylobacter pylori J99).